Consider the following 321-residue polypeptide: Phospho-N-acetylmuramoyl-pentapeptide-transferase (321 aa).

The next 10 helical transmembrane spans lie at 6–26, 53–73, 77–97, 121–141, 144–164, 175–195, 200–220, 226–246, 251–271, and 301–321; these read MLIP…LFIG, TMGG…VGIW, LTLS…LGFY, ILGA…HTLW, IIGN…WLVG, LDGL…IIAA, TDVL…LMFN, IFMG…VAIL, WSLL…ILQV, and IDLT…AFFL.

This sequence belongs to the glycosyltransferase 4 family. MraY subfamily. The cofactor is Mg(2+).

The protein resides in the cell membrane. It catalyses the reaction UDP-N-acetyl-alpha-D-muramoyl-L-alanyl-gamma-D-glutamyl-L-lysyl-D-alanyl-D-alanine + di-trans,octa-cis-undecaprenyl phosphate = Mur2Ac(oyl-L-Ala-gamma-D-Glu-L-Lys-D-Ala-D-Ala)-di-trans,octa-cis-undecaprenyl diphosphate + UMP. It functions in the pathway cell wall biogenesis; peptidoglycan biosynthesis. Its function is as follows. Catalyzes the initial step of the lipid cycle reactions in the biosynthesis of the cell wall peptidoglycan: transfers peptidoglycan precursor phospho-MurNAc-pentapeptide from UDP-MurNAc-pentapeptide onto the lipid carrier undecaprenyl phosphate, yielding undecaprenyl-pyrophosphoryl-MurNAc-pentapeptide, known as lipid I. The chain is Phospho-N-acetylmuramoyl-pentapeptide-transferase from Lacticaseibacillus paracasei (strain ATCC 334 / BCRC 17002 / CCUG 31169 / CIP 107868 / KCTC 3260 / NRRL B-441) (Lactobacillus paracasei).